The primary structure comprises 631 residues: MGSHESLGPYFLVFLLLLLLPPPLFRAGSLRYHGPDWRIFHRLALGSRRAHHHHGPGWRQHWRQGQAGHRCQGSFDLYFILDKSGSVNNNWIDLYMWVEETVARFQSPNIRMCFITYSTDGQTVLPLTSDKNRIKNGLDQLQKIVPDGHTFMQAGFRKAIQQIESFNSGNKVPSMIIAMTDGELVAHAFQDTLREAQKARKLGANVYTLGVADYNLDQITAIADSPGHVFAVENGFKALRSTIDALTSKVCLDVTSVEPSSECVGEPYHVVIHGNGFQNLKKRDEVICRFIFNESTIIDEKPTSIDNNSMNCPGPKLEKPGEEYSIEVSLNKGKTFFKSNVSITSTTCGIFRNWLYFVPLLLLVPLLLCCVWRLCRKQTVKEPPPVQKPEKEPEQEKPPSPPPPPPPPPPPLPPPPPAPVNTCPTVIICCCGCQGVGGMRRIEGNLDTFCDLSHASCHQVPWMCCQSRDQGRYLSLALAQSQYAQAPCCPRICFPHSQECLSLPQAPCSPRMCLRHSRECLALKQARCSPNICLRHSQHSRECLARKQAPCSPRICLRHSPEYFSQAQTLCNPKSCLQPSRECLPLTCSSRCRLPPARCLRPPSRMLPLLSPLLRHTAEPPLSLPPSEPNF.

An N-terminal signal peptide occupies residues 1–27 (MGSHESLGPYFLVFLLLLLLPPPLFRA). The Extracellular portion of the chain corresponds to 28 to 353 (GSLRYHGPDW…TSTTCGIFRN (326 aa)). The VWFA domain occupies 76–246 (DLYFILDKSG…KALRSTIDAL (171 aa)). A divalent metal cation is bound by residues serine 84, serine 86, and threonine 150. A helical transmembrane segment spans residues 354–374 (WLYFVPLLLLVPLLLCCVWRL). The Cytoplasmic portion of the chain corresponds to 375-631 (CRKQTVKEPP…LSLPPSEPNF (257 aa)). Positions 382 to 413 (EPPPVQKPEKEPEQEKPPSPPPPPPPPPPPLP) are disordered. The segment covering 388 to 397 (KPEKEPEQEK) has biased composition (basic and acidic residues). Over residues 398 to 413 (PPSPPPPPPPPPPPLP) the composition is skewed to pro residues.

Belongs to the ATR family.

The protein localises to the membrane. The chain is Anthrax toxin receptor-like (ANTXRL) from Homo sapiens (Human).